Consider the following 32-residue polypeptide: Beta-hexosaminidase (32 aa).

In terms of domain architecture, GH18 spans 1-32; it reads GKSSSRPLGDATLGDLDFDIEVTQDYWDDLAR. The Proton donor role is filled by glutamate 21.

The protein belongs to the glycosyl hydrolase 18 family. Chitinase class II subfamily.

It carries out the reaction Hydrolysis of terminal non-reducing N-acetyl-D-hexosamine residues in N-acetyl-beta-D-hexosaminides.. Its activity is regulated as follows. Activity is decreased by HgCl(2) and maltose. Activity is stimulated by Na(2)SeO(4), BaCl(2), MgCl(2), chondroitin 6-sulfate and phenylmethylsulfonyl fluoride. Functionally, preferentially hydrolyzes pNP-GlcNAc, hydrolyzes pNP-GalNAc to a lesser extent. The polypeptide is Beta-hexosaminidase (Palythoa caribaeorum (White encrusting zoanthid coral)).